The following is a 403-amino-acid chain: Aloesone synthase (403 aa).

Residue Cys174 is part of the active site. Residues Ser281 and Gly318 to Ala321 each bind CoA.

Belongs to the thiolase-like superfamily. Chalcone/stilbene synthases family. Homodimer.

The protein operates within secondary metabolite biosynthesis; flavonoid biosynthesis. Functionally, catalyzes the iterative condensations of 6, 7 or 8 molecules of malonyl-CoA to produce various aromatic polyketides. Produces the heptaketide aloesone, the aglycone of aloesin, from 7 molecules of malonyl-CoA as a major product. Also able to produce a hexaketide pyrone, a heptaketide 6-(2-acetyl-3,5-dihydroxybenzyl)-4-hydroxy-2-pyrone, a novel heptaketide 6-(2-(2,4-dihydroxy-6-methylphenyl)-2-oxoethyl)-4-hydroxy-2-pyrone and octaketides SEK4/SEK4b. The chain is Aloesone synthase (PKS3) from Aloe arborescens (Kidachi aloe).